Reading from the N-terminus, the 287-residue chain is Probable F-box protein At5g04010 (287 aa).

The F-box; degenerate domain occupies 50 to 101 (PSPPSWEILCLVGPYMDPESLAVASCVSTTWSKCFSSEDLWKSLPATRHSIF).

The polypeptide is Probable F-box protein At5g04010 (NSFBx) (Arabidopsis thaliana (Mouse-ear cress)).